The chain runs to 181 residues: MFVSRLAASGLLLLALLAVSLDGKPLQQWSQRWPHLEIPPLVVQNWKSPTQLQARESPAGGTTALREELSLGPEAALDTPPAGPDGGPRGSKAAAAAPQRLSKSKGASATSAASRDLRTDGKQARQNWGRLVSPDHHSAAGGGGGGGGGARRLKGLAKKRAGNGCFGLKLDRIGSMSGLGC.

The signal sequence occupies residues 1 to 23 (MFVSRLAASGLLLLALLAVSLDG). The propeptide occupies 24–30 (KPLQQWS). Gln-31 is subject to Pyrrolidone carboxylic acid. Positions 41–43 (LVV) are excised as a propeptide. Gln-44 bears the Pyrrolidone carboxylic acid mark. 2 consecutive propeptides follow at residues 50–78 (TQLQARESPAGGTTALREELSLGPEAALD) and 90–157 (GSKA…KGLA). The tract at residues 74-153 (EAALDTPPAG…GGGGGGARRL (80 aa)) is disordered. The span at 104–114 (SKGASATSAAS) shows a compositional bias: low complexity. Residues 140–150 (AGGGGGGGGGA) are compositionally biased toward gly residues. Cys-165 and Cys-181 are oxidised to a cystine.

This sequence in the N-terminal section; belongs to the bradykinin-potentiating peptide family. It in the C-terminal section; belongs to the natriuretic peptide family. In terms of tissue distribution, venom gland.

It localises to the secreted. Its function is as follows. Bradykinin-potentiating peptide both inhibits the activity of the angiotensin-converting enzyme (ACE) and enhances the action of bradykinin by inhibiting the peptidases that inactivate it. It acts as an indirect hypotensive agent. In terms of biological role, antagonizes the vasodilatory actions of bradykinin at the B2 bradykinin receptor. Has no demonstrable hypotensive activity when injected intravenously in rats. Has a vasorelaxant activity in rat aortic strips and a diuretic potency in anesthetized rats. May act by activating natriuretic receptors (NPR1 and/or NPR2). The protein is Bradykinin-potentiating and C-type natriuretic peptides of Crotalus durissus collilineatus (Brazilian rattlesnake).